Consider the following 181-residue polypeptide: Protein Syd (181 aa).

It belongs to the Syd family.

The protein localises to the cell inner membrane. Functionally, interacts with the SecY protein in vivo. May bind preferentially to an uncomplexed state of SecY, thus functioning either as a chelating agent for excess SecY in the cell or as a regulatory factor that negatively controls the translocase function. The sequence is that of Protein Syd from Shigella flexneri serotype 5b (strain 8401).